The chain runs to 362 residues: 3-dehydroquinate synthase (362 aa).

NAD(+) is bound by residues 74-79, 108-112, 132-133, Lys145, Lys154, and 172-175; these read DGEGYK, GVIGD, TT, and TLDT. 3 residues coordinate Zn(2+): Glu187, His250, and His267.

It belongs to the sugar phosphate cyclases superfamily. Dehydroquinate synthase family. Requires Co(2+) as cofactor. The cofactor is Zn(2+). It depends on NAD(+) as a cofactor.

The protein resides in the cytoplasm. The enzyme catalyses 7-phospho-2-dehydro-3-deoxy-D-arabino-heptonate = 3-dehydroquinate + phosphate. The protein operates within metabolic intermediate biosynthesis; chorismate biosynthesis; chorismate from D-erythrose 4-phosphate and phosphoenolpyruvate: step 2/7. In terms of biological role, catalyzes the conversion of 3-deoxy-D-arabino-heptulosonate 7-phosphate (DAHP) to dehydroquinate (DHQ). This Geobacter sp. (strain M21) protein is 3-dehydroquinate synthase.